The following is a 211-amino-acid chain: ATP-dependent Clp protease proteolytic subunit (211 aa).

S114 (nucleophile) is an active-site residue. The active site involves H139.

It belongs to the peptidase S14 family. Fourteen ClpP subunits assemble into 2 heptameric rings which stack back to back to give a disk-like structure with a central cavity, resembling the structure of eukaryotic proteasomes.

Its subcellular location is the cytoplasm. The catalysed reaction is Hydrolysis of proteins to small peptides in the presence of ATP and magnesium. alpha-casein is the usual test substrate. In the absence of ATP, only oligopeptides shorter than five residues are hydrolyzed (such as succinyl-Leu-Tyr-|-NHMec, and Leu-Tyr-Leu-|-Tyr-Trp, in which cleavage of the -Tyr-|-Leu- and -Tyr-|-Trp bonds also occurs).. In terms of biological role, cleaves peptides in various proteins in a process that requires ATP hydrolysis. Has a chymotrypsin-like activity. Plays a major role in the degradation of misfolded proteins. In Pseudomonas fluorescens (strain Pf0-1), this protein is ATP-dependent Clp protease proteolytic subunit.